The following is a 197-amino-acid chain: TM2 domain-containing protein 1 (197 aa).

Positions 1–32 (MAFRWRSLMRFRSTTRLLLLFTFCLTVIHSLG) are cleaved as a signal peptide. Residues 33–105 (NDVDSCDKLH…GFNKTIPCRN (73 aa)) lie on the Extracellular side of the membrane. N-linked (GlcNAc...) asparagine glycosylation is found at Asn77, Asn84, Asn98, and Asn105. The helical transmembrane segment at 106 to 126 (VSGYSYKVAVALSLFLGWIGA) threads the bilayer. Residues 108–155 (GYSYKVAVALSLFLGWIGADRFYLGYPALGLLKFCTVGFCGIGSLVDF) enclose the TM2 domain. Residues 127–143 (DRFYLGYPALGLLKFCT) are Cytoplasmic-facing. The helical transmembrane segment at 144 to 164 (VGFCGIGSLVDFMLISMQIVG) threads the bilayer. Residues 165 to 197 (PSDGSDYIVDYYGARLTRLSITNETYRRMQPSP) lie on the Extracellular side of the membrane. The N-linked (GlcNAc...) asparagine glycan is linked to Asn187.

The protein belongs to the TM2 family.

The protein localises to the membrane. The polypeptide is TM2 domain-containing protein 1 (tm2d1) (Danio rerio (Zebrafish)).